The sequence spans 138 residues: Large ribosomal subunit protein uL16 (138 aa).

A compositionally biased stretch (basic residues) spans 1–19 (MLIPRKVKHRKQHHPKKKG). The tract at residues 1–24 (MLIPRKVKHRKQHHPKKKGTASGG) is disordered.

This sequence belongs to the universal ribosomal protein uL16 family. Part of the 50S ribosomal subunit.

Binds 23S rRNA and is also seen to make contacts with the A and possibly P site tRNAs. In Mycobacteroides abscessus (strain ATCC 19977 / DSM 44196 / CCUG 20993 / CIP 104536 / JCM 13569 / NCTC 13031 / TMC 1543 / L948) (Mycobacterium abscessus), this protein is Large ribosomal subunit protein uL16.